The chain runs to 205 residues: High frequency lysogenization protein HflD homolog (205 aa).

It belongs to the HflD family.

It localises to the cytoplasm. The protein localises to the cell inner membrane. This Photobacterium profundum (strain SS9) protein is High frequency lysogenization protein HflD homolog.